We begin with the raw amino-acid sequence, 91 residues long: Early E3B 10.4 kDa protein (91 aa).

A signal peptide spans 1–22 (MIPRVLILLTLVALFCACSTLA). The Lumenal segment spans residues 23–34 (AVAHIEVDCIPP). A helical membrane pass occupies residues 35–60 (FTVYLLYGFVTLILICSLVTVVIAFI). Over 61-91 (QFIDWICVRIAYLRHHPQYRDRTIADLLRIL) the chain is Cytoplasmic.

It belongs to the adenoviridae E3B family.

It localises to the host endoplasmic reticulum membrane. In terms of biological role, down-regulates the EGF receptor. In Homo sapiens (Human), this protein is Early E3B 10.4 kDa protein.